Reading from the N-terminus, the 132-residue chain is Small ribosomal subunit protein uS8 (132 aa).

This sequence belongs to the universal ribosomal protein uS8 family. Part of the 30S ribosomal subunit. Contacts proteins S5 and S12.

Functionally, one of the primary rRNA binding proteins, it binds directly to 16S rRNA central domain where it helps coordinate assembly of the platform of the 30S subunit. In Lacticaseibacillus casei (strain BL23) (Lactobacillus casei), this protein is Small ribosomal subunit protein uS8.